A 198-amino-acid polypeptide reads, in one-letter code: Protein GrpE (198 aa).

Belongs to the GrpE family. Homodimer.

The protein resides in the cytoplasm. Functionally, participates actively in the response to hyperosmotic and heat shock by preventing the aggregation of stress-denatured proteins, in association with DnaK and GrpE. It is the nucleotide exchange factor for DnaK and may function as a thermosensor. Unfolded proteins bind initially to DnaJ; upon interaction with the DnaJ-bound protein, DnaK hydrolyzes its bound ATP, resulting in the formation of a stable complex. GrpE releases ADP from DnaK; ATP binding to DnaK triggers the release of the substrate protein, thus completing the reaction cycle. Several rounds of ATP-dependent interactions between DnaJ, DnaK and GrpE are required for fully efficient folding. This chain is Protein GrpE, found in Actinobacillus pleuropneumoniae serotype 5b (strain L20).